The sequence spans 87 residues: UPF0250 protein CKO_02527 (87 aa).

This sequence belongs to the UPF0250 family.

The polypeptide is UPF0250 protein CKO_02527 (Citrobacter koseri (strain ATCC BAA-895 / CDC 4225-83 / SGSC4696)).